The primary structure comprises 243 residues: Tubulin-folding cofactor B (243 aa).

Positions 181–223 (RAESLGPGYWVGIQYDEPLGKHDGMVKGTRFFECPRLQGGMVR) constitute a CAP-Gly domain.

The protein belongs to the TBCB family. In terms of assembly, supercomplex made of cofactors A to E. Cofactors A and D function by capturing and stabilizing tubulin in a quasi-native conformation. Cofactor E binds to the cofactor D-tubulin complex; interaction with cofactor C then causes the release of tubulin polypeptides that are committed to the native state. Interacts with TUBA6. As to expression, expressed in roots, stems, leaves, flowers and siliques.

It localises to the cytoplasm. Involved in control of cell division. Regulates probably the availability of alpha-tubulin for dimerization of alpha-/beta-tubulin, which is required for proper microtubule biogenesis. Decreased expression of TFCB results in enlarged mesophyll cells and leaf epidermal cells with bulged nuclei, increased ploidy and increased numbers of spindles and phragmoplasts. This is Tubulin-folding cofactor B (TFCB) from Arabidopsis thaliana (Mouse-ear cress).